Consider the following 444-residue polypeptide: L-cysteine:1D-myo-inositol 2-amino-2-deoxy-alpha-D-glucopyranoside ligase (444 aa).

C66 serves as a coordination point for Zn(2+). Residues 66 to 69 (CGIT), T81, and 104 to 106 (NVT) contribute to the L-cysteinyl-5'-AMP site. A 'HIGH' region motif is present at residues 68–78 (ITPYDATHLGH). The 'ERGGDP' region motif lies at 206–211 (EHGGDP). An L-cysteinyl-5'-AMP-binding site is contributed by W246. C250 contacts Zn(2+). 268-270 (GSD) contributes to the L-cysteinyl-5'-AMP binding site. H275 provides a ligand contact to Zn(2+). V302 is an L-cysteinyl-5'-AMP binding site. The 'KMSKS' region signature appears at 308–312 (KMSKS).

This sequence belongs to the class-I aminoacyl-tRNA synthetase family. MshC subfamily. In terms of assembly, monomer. Zn(2+) serves as cofactor.

It carries out the reaction 1D-myo-inositol 2-amino-2-deoxy-alpha-D-glucopyranoside + L-cysteine + ATP = 1D-myo-inositol 2-(L-cysteinylamino)-2-deoxy-alpha-D-glucopyranoside + AMP + diphosphate + H(+). Its function is as follows. Catalyzes the ATP-dependent condensation of GlcN-Ins and L-cysteine to form L-Cys-GlcN-Ins. In Parafrankia sp. (strain EAN1pec), this protein is L-cysteine:1D-myo-inositol 2-amino-2-deoxy-alpha-D-glucopyranoside ligase.